A 296-amino-acid chain; its full sequence is GTPase Era (296 aa).

Residues 3–170 (KSGFITIVGR…LELMVKYLPE (168 aa)) form the Era-type G domain. Residues 11–18 (GRPNVGKS) form a G1 region. 11-18 (GRPNVGKS) contacts GTP. The segment at 37–41 (QTTRN) is G2. The G3 stretch occupies residues 58–61 (DTPG). Residues 58–62 (DTPGI) and 120–123 (NKVD) each bind GTP. The segment at 120–123 (NKVD) is G4. The segment at 149–151 (ISA) is G5. A KH type-2 domain is found at 201 to 278 (LSQEVPHGIA…NIKIWVKVRK (78 aa)).

It belongs to the TRAFAC class TrmE-Era-EngA-EngB-Septin-like GTPase superfamily. Era GTPase family. In terms of assembly, monomer.

The protein localises to the cytoplasm. It localises to the cell membrane. In terms of biological role, an essential GTPase that binds both GDP and GTP, with rapid nucleotide exchange. Plays a role in 16S rRNA processing and 30S ribosomal subunit biogenesis and possibly also in cell cycle regulation and energy metabolism. This is GTPase Era from Clostridium perfringens (strain 13 / Type A).